The following is a 462-amino-acid chain: MGIQIIGQIERINGKELSYGDFAERYLAKNQPVVISDLTEDWRAREDWVSENGNPNLHVFATHFGKSRVQVADCDTREFTDQKRLEMSVTEFVEQWTNKDSIEESVLYLKDWHFVKEYPDYTAYQTPPLFSDDWLNVYLDNYQMHEDRDSFQKYDQISCSDYRFVYMGGKGSWTPLHADVFRSYSWSANVCGKKRWLFLPPPQSHLVYDRYMKNCVYDIFEEVNETKFPGFKKTTWLECIQEPGEIIFVPSGWHHQVYNLEDTISINHNWLNAYNLSWVWDLLWKDYKDTEESIEDIRDICDDFEAICQRNLAANTGMNLNDFFLFMSRFSLGNMVLLQSYSDKHKNLNSCSLAMAQNLLMNLSTILKVMMKMISAGGVTAEEVYLDLRETLEDPQFLRFVRDMGRTYARIHMEEEDQFLSSKELLQKLSGLAGPNMQICSPKDLVEMINHHNTFSSQIYFI.

One can recognise a JmjC domain in the interval 115–287 (VKEYPDYTAY…WVWDLLWKDY (173 aa)). Fe cation-binding residues include His177, Asp179, and His255.

This sequence belongs to the JARID1 histone demethylase family. Fe(2+) serves as cofactor. As to expression, mostly expressed in leaves, and, to a lower extent, in inflorescences, roots, siliques and stems.

Its subcellular location is the nucleus. The enzyme catalyses N(omega),N(omega)-dimethyl-L-arginyl-[protein] + 2-oxoglutarate + O2 = N(omega)-methyl-L-arginyl-[protein] + formaldehyde + succinate + CO2. Its function is as follows. Histone demethylase that demethylates 'Arg-3' (H4R3me) of histone H4 with a specific activity for H4R3me2. Involved in the positive regulation of gene expression. Together with JMJ22, positively regulates seed germination by promoting the removal of repressive histone arginine methylations (e.g. H4R3me2) at GA3ox1 and GA3ox2 to trigger gibberellic acid (GA) biosynthesis. This is Arginine-specific demethylase JMJ20 from Arabidopsis thaliana (Mouse-ear cress).